We begin with the raw amino-acid sequence, 242 residues long: Enolase-phosphatase E1 (242 aa).

It belongs to the HAD-like hydrolase superfamily. MasA/MtnC family. In terms of assembly, monomer. The cofactor is Mg(2+).

It catalyses the reaction 5-methylsulfanyl-2,3-dioxopentyl phosphate + H2O = 1,2-dihydroxy-5-(methylsulfanyl)pent-1-en-3-one + phosphate. It functions in the pathway amino-acid biosynthesis; L-methionine biosynthesis via salvage pathway; L-methionine from S-methyl-5-thio-alpha-D-ribose 1-phosphate: step 3/6. Its pathway is amino-acid biosynthesis; L-methionine biosynthesis via salvage pathway; L-methionine from S-methyl-5-thio-alpha-D-ribose 1-phosphate: step 4/6. Its function is as follows. Bifunctional enzyme that catalyzes the enolization of 2,3-diketo-5-methylthiopentyl-1-phosphate (DK-MTP-1-P) into the intermediate 2-hydroxy-3-keto-5-methylthiopentenyl-1-phosphate (HK-MTPenyl-1-P), which is then dephosphorylated to form the acireductone 1,2-dihydroxy-3-keto-5-methylthiopentene (DHK-MTPene). This chain is Enolase-phosphatase E1, found in Synechococcus sp. (strain WH7803).